The following is a 433-amino-acid chain: Glutamate-1-semialdehyde 2,1-aminomutase (433 aa).

N6-(pyridoxal phosphate)lysine is present on Lys-273.

The protein belongs to the class-III pyridoxal-phosphate-dependent aminotransferase family. HemL subfamily. As to quaternary structure, homodimer. Pyridoxal 5'-phosphate serves as cofactor.

It localises to the cytoplasm. The enzyme catalyses (S)-4-amino-5-oxopentanoate = 5-aminolevulinate. It participates in porphyrin-containing compound metabolism; protoporphyrin-IX biosynthesis; 5-aminolevulinate from L-glutamyl-tRNA(Glu): step 2/2. Its pathway is porphyrin-containing compound metabolism; chlorophyll biosynthesis. The protein is Glutamate-1-semialdehyde 2,1-aminomutase of Rippkaea orientalis (strain PCC 8801 / RF-1) (Cyanothece sp. (strain PCC 8801)).